Consider the following 325-residue polypeptide: Olfactory receptor 5T18 (325 aa).

The Extracellular portion of the chain corresponds to 1–22 (MRNITEATFFVLKGLTDNNELQ). N-linked (GlcNAc...) asparagine glycosylation occurs at Asn-3. Transmembrane regions (helical) follow at residues 23–43 (IILFLLFLAIYIFTLIGNVGL) and 44–64 (IILVVGDSQLHNPMYCFLSVL). Over 65–97 (SSVDACYSTDITPNMLVGFMSKSKIISFYGCAT) the chain is Extracellular. A disulfide bridge links Cys-95 with Cys-187. A helical membrane pass occupies residues 98-118 (QMFLAVTFGTTECFLLAAMAY). Over 119 to 139 (DRYVAIHDPLLYAVSMSPRVY) the chain is Cytoplasmic. Residues 140-160 (IPLIIASYAGGIVHAIIHTVA) form a helical membrane-spanning segment. The Extracellular portion of the chain corresponds to 161–194 (TFSLSFCRSNEVKHIFCDIPPLLAISCSETYVNE). The helical transmembrane segment at 195 to 215 (LLLFFFVSFIELVTILIVLVS) threads the bilayer. Topologically, residues 216 to 234 (YAFILLSILKMNSSEGRRK) are cytoplasmic. The helical transmembrane segment at 235 to 255 (VFSTCGAHLTAVSIYYGTILF) threads the bilayer. Over 256 to 269 (MYVRPSSNYSLEHD) the chain is Extracellular. A helical membrane pass occupies residues 270-290 (MIVSTFYTIGIPMLNPIIYSL). The Cytoplasmic segment spans residues 291–325 (RNKDVKEAMKRVLRKKINIKHRIKKLNDFSVFLMP).

Belongs to the G-protein coupled receptor 1 family.

The protein localises to the cell membrane. Functionally, potential odorant receptor. The protein is Olfactory receptor 5T18 of Mus musculus (Mouse).